A 692-amino-acid chain; its full sequence is Elongation factor G (692 aa).

Positions 8–282 (ENTRNIGIMA…AVIDYLPSPV (275 aa)) constitute a tr-type G domain. GTP contacts are provided by residues 17 to 24 (AHIDAGKT), 81 to 85 (DTPGH), and 135 to 138 (NKMD).

The protein belongs to the TRAFAC class translation factor GTPase superfamily. Classic translation factor GTPase family. EF-G/EF-2 subfamily.

The protein localises to the cytoplasm. Its function is as follows. Catalyzes the GTP-dependent ribosomal translocation step during translation elongation. During this step, the ribosome changes from the pre-translocational (PRE) to the post-translocational (POST) state as the newly formed A-site-bound peptidyl-tRNA and P-site-bound deacylated tRNA move to the P and E sites, respectively. Catalyzes the coordinated movement of the two tRNA molecules, the mRNA and conformational changes in the ribosome. The polypeptide is Elongation factor G (Lysinibacillus sphaericus (strain C3-41)).